The sequence spans 480 residues: Zinc finger protein ztf-16 (480 aa).

A C2H2-type 1 zinc finger spans residues 5–27 (NACTECGFTTTVFSEFQGHIEKH). The tract at residues 25–75 (EKHENEHSRSSSGEMSNSQTIEWGDGIQSSTPSPRSTPPSDPTPSPDSDEH) is disordered. Polar residues predominate over residues 34-45 (SSSGEMSNSQTI). The segment covering 59–69 (RSTPPSDPTPS) has biased composition (pro residues). 5 C2H2-type zinc fingers span residues 103 to 125 (HVCPHCNFTTCMSQHMKSHLEAH), 133 to 155 (YQCDICKMQFSQKANMHRHRMRH), 161 to 183 (YECRFCKKRFFRKDQMQEHSMTH), 190 to 215 (FDCPVSQCNMQFSQHNALRAHLEETH), and 223 to 246 (ASCKRCNLMFANSRRLLLHFQTRH). Disordered regions lie at residues 243-275 (QTRHDDSESSPKKENTPKRKKLSNGNALPMDPA), 290-311 (EFSPPNTDTSDNSTSSEFDKIP), and 376-417 (TSSS…KEDE). The span at 244 to 259 (TRHDDSESSPKKENTP) shows a compositional bias: basic and acidic residues. Low complexity-rich tracts occupy residues 292–305 (SPPNTDTSDNSTSS) and 376–403 (TSSSVSVSAPSPSEQSHSPPANESSLSL). Residues 404–413 (TEKEKSPTPE) show a composition bias toward basic and acidic residues. 2 consecutive C2H2-type zinc fingers follow at residues 420 to 442 (VECCHCGMMFYDNTMYLLHKSLH) and 448 to 472 (FKCALCGTQCGEKYMFTTHVIFADH).

It belongs to the Ikaros C2H2-type zinc-finger protein family. In terms of tissue distribution, expressed in the somatic gonad, hypodermis and cells in the head and tail. Expressed in amphid and phasmid sheath glia, amphid and phasmid socket glia, and in neurons in the head.

The protein localises to the nucleus. Positively regulates the expression of ver-1 in the amphid sheath glia of amphid sensory neurons. Together with ehn-3, plays a role in somatic gonad development and is required for proper gonadal primordium assembly and somatic gonad precursor cell morphology. The polypeptide is Zinc finger protein ztf-16 (Caenorhabditis elegans).